Consider the following 1149-residue polypeptide: Transforming acidic coiled-coil-containing protein 2 (1149 aa).

Disordered regions lie at residues methionine 1 to glutamine 73, serine 91 to glycine 227, and proline 247 to threonine 430. Positions threonine 13–glutamine 35 are enriched in polar residues. The span at serine 91–proline 106 shows a compositional bias: low complexity. Serine 100 is subject to Phosphoserine. Over residues lysine 155–glutamate 180 the composition is skewed to pro residues. Residue serine 265 is modified to Phosphoserine. Composition is skewed to polar residues over residues glutamate 267–alanine 284 and threonine 300–leucine 317. Basic residues predominate over residues lysine 318–threonine 334. Serine 354 carries the post-translational modification Phosphoserine. Residues serine 358–threonine 368 are compositionally biased toward basic and acidic residues. The residue at position 419 (serine 419) is a Phosphoserine. Phosphothreonine is present on threonine 439. The tract at residues serine 463 to lysine 617 is disordered. A compositionally biased stretch (basic residues) spans lysine 481–lysine 498. Residues proline 508–serine 596 form the SPAZ domain. Phosphoserine is present on residues serine 510 and serine 514. Threonine 516 bears the Phosphothreonine mark. Positions asparagine 541 to asparagine 561 are enriched in polar residues. A phosphoserine mark is found at serine 552, serine 582, serine 585, serine 587, and serine 596. Low complexity predominate over residues lysine 575 to serine 590. Phosphothreonine is present on residues threonine 632, threonine 653, and threonine 657. Disordered stretches follow at residues lysine 636–serine 665 and aspartate 696–leucine 719. Positions proline 652–serine 665 are enriched in low complexity. A compositionally biased stretch (polar residues) spans serine 701–serine 716. A phosphoserine mark is found at serine 714 and serine 736. Threonine 755 bears the Phosphothreonine mark. Positions proline 756 to phenylalanine 780 are disordered. Residues serine 759 and serine 771 each carry the phosphoserine modification. The span at aspartate 770–phenylalanine 780 shows a compositional bias: polar residues. Coiled coils occupy residues alanine 877–arginine 905 and aspartate 948–lysine 1148.

The protein belongs to the TACC family. In terms of assembly, interacts with microtubules. Interacts with YEATS4, GCN5L2 and PCAF. Interacts with CCDC100/CEP120. Post-translationally, phosphorylated; which is required for localization in centrosome. As to expression, expressed in brain, kidney, lung, thymus and ovary. Not detectable in normal tissues at protein level.

Its subcellular location is the cytoplasm. The protein resides in the nucleus. It localises to the cytoskeleton. The protein localises to the microtubule organizing center. It is found in the centrosome. In terms of biological role, plays a role in the microtubule-dependent coupling of the nucleus and the centrosome. Involved in the processes that regulate centrosome-mediated interkinetic nuclear migration (INM) of neural progenitors. May play a role in organizing centrosomal microtubules. This Mus musculus (Mouse) protein is Transforming acidic coiled-coil-containing protein 2 (Tacc2).